Here is a 289-residue protein sequence, read N- to C-terminus: Acetyl-coenzyme A carboxylase carboxyl transferase subunit beta (289 aa).

The CoA carboxyltransferase N-terminal domain maps to 28 to 289; sequence VMTKCPKCKK…QGGEMAVWQS (262 aa). The Zn(2+) site is built by cysteine 32, cysteine 35, cysteine 51, and cysteine 54. Residues 32–54 form a C4-type zinc finger; that stretch reads CPKCKKIMYTKEVLKNLKVCVNC.

Belongs to the AccD/PCCB family. As to quaternary structure, acetyl-CoA carboxylase is a heterohexamer composed of biotin carboxyl carrier protein (AccB), biotin carboxylase (AccC) and two subunits each of ACCase subunit alpha (AccA) and ACCase subunit beta (AccD). The cofactor is Zn(2+).

Its subcellular location is the cytoplasm. The enzyme catalyses N(6)-carboxybiotinyl-L-lysyl-[protein] + acetyl-CoA = N(6)-biotinyl-L-lysyl-[protein] + malonyl-CoA. The protein operates within lipid metabolism; malonyl-CoA biosynthesis; malonyl-CoA from acetyl-CoA: step 1/1. In terms of biological role, component of the acetyl coenzyme A carboxylase (ACC) complex. Biotin carboxylase (BC) catalyzes the carboxylation of biotin on its carrier protein (BCCP) and then the CO(2) group is transferred by the transcarboxylase to acetyl-CoA to form malonyl-CoA. The sequence is that of Acetyl-coenzyme A carboxylase carboxyl transferase subunit beta from Bacillus thuringiensis (strain Al Hakam).